The primary structure comprises 206 residues: Small ribosomal subunit protein uS7 (206 aa).

The segment covering 1–19 has biased composition (acidic residues); the sequence is MSAEDTPEADADAAEESEP. Residues 1 to 25 are disordered; it reads MSAEDTPEADADAAEESEPETARAK. The residue at position 2 (Ser-2) is an N-acetylserine.

This sequence belongs to the universal ribosomal protein uS7 family. In terms of assembly, part of the 30S ribosomal subunit.

Its function is as follows. One of the primary rRNA binding proteins, it binds directly to 16S rRNA where it nucleates assembly of the head domain of the 30S subunit. Is located at the subunit interface close to the decoding center. The polypeptide is Small ribosomal subunit protein uS7 (Haloarcula marismortui (strain ATCC 43049 / DSM 3752 / JCM 8966 / VKM B-1809) (Halobacterium marismortui)).